The sequence spans 576 residues: Apolipoprotein N-acyltransferase 1 (576 aa).

7 helical membrane-spanning segments follow: residues 15-35, 38-58, 60-80, 92-112, 128-148, 168-188, and 204-224; these read LILC…FSFF, GVFA…TSIW, AFLW…YWIP, FVSI…FFLF, YILL…FQIF, ICGV…FLIL, and IASL…IGYI. The CN hydrolase domain occupies 236 to 538; it reads LSVLMIQPDT…TGTRAFSIRL (303 aa). Glu285 (proton acceptor) is an active-site residue. The active site involves Lys355. Cys446 (nucleophile) is an active-site residue. The chain crosses the membrane as a helical span at residues 549–569; it reads FGNSFLWIFCILILISRLIFV.

This sequence belongs to the CN hydrolase family. Apolipoprotein N-acyltransferase subfamily.

The protein localises to the cell inner membrane. The enzyme catalyses N-terminal S-1,2-diacyl-sn-glyceryl-L-cysteinyl-[lipoprotein] + a glycerophospholipid = N-acyl-S-1,2-diacyl-sn-glyceryl-L-cysteinyl-[lipoprotein] + a 2-acyl-sn-glycero-3-phospholipid + H(+). The protein operates within protein modification; lipoprotein biosynthesis (N-acyl transfer). Its function is as follows. Catalyzes the phospholipid dependent N-acylation of the N-terminal cysteine of apolipoprotein, the last step in lipoprotein maturation. This chain is Apolipoprotein N-acyltransferase 1, found in Leptospira interrogans serogroup Icterohaemorrhagiae serovar copenhageni (strain Fiocruz L1-130).